Here is a 336-residue protein sequence, read N- to C-terminus: Uridine nucleosidase 1 (336 aa).

Residues D29 and H260 contribute to the active site.

Belongs to the IUNH family. As to quaternary structure, homodimer. Component of the NSH heterocomplex made of URH1/NSH1 and URH2/NSH2 which exhibits strong xanthosine nucleosidase activity. Interacts with URH2. As to expression, expressed ubiquitously in leaves, flowers, stems, pollen cells, root tip meristem and root vasculature.

Its subcellular location is the cytoplasm. It catalyses the reaction uridine + H2O = D-ribose + uracil. The enzyme catalyses xanthosine + H2O = D-ribose + xanthine. The catalysed reaction is inosine + H2O = hypoxanthine + D-ribose. It carries out the reaction adenosine + H2O = D-ribose + adenine. Involved in purine and pyrimidine breakdown rather than in pyrimidine salvage, especially in response to dark stress. Together with URH2, required for efficient inosine and xanthosine hydrolytic activities. Unable to use cytidine as a substrate. Can use uridine, inosine, adenosine as well as the cytokinin derivative isopentenyladenine-riboside as substrates. Also hydrolyzes xanthosine with high efficiency. This chain is Uridine nucleosidase 1, found in Arabidopsis thaliana (Mouse-ear cress).